Here is a 687-residue protein sequence, read N- to C-terminus: Glycine--tRNA ligase beta subunit (687 aa).

This sequence belongs to the class-II aminoacyl-tRNA synthetase family. Tetramer of two alpha and two beta subunits.

It localises to the cytoplasm. It carries out the reaction tRNA(Gly) + glycine + ATP = glycyl-tRNA(Gly) + AMP + diphosphate. The protein is Glycine--tRNA ligase beta subunit of Trichlorobacter lovleyi (strain ATCC BAA-1151 / DSM 17278 / SZ) (Geobacter lovleyi).